We begin with the raw amino-acid sequence, 199 residues long: Probable GTP-binding protein EngB (199 aa).

An EngB-type G domain is found at 28–199; that stretch reads DLPEVALAGR…EAWDTILAEL (172 aa). GTP-binding positions include 36 to 43, 63 to 67, 81 to 84, 148 to 151, and 180 to 182; these read GRSNVGKS, GKTQL, DVPG, TKAD, and FSS. Mg(2+) contacts are provided by Ser-43 and Thr-65.

The protein belongs to the TRAFAC class TrmE-Era-EngA-EngB-Septin-like GTPase superfamily. EngB GTPase family. Mg(2+) serves as cofactor.

Necessary for normal cell division and for the maintenance of normal septation. This chain is Probable GTP-binding protein EngB, found in Streptococcus thermophilus (strain CNRZ 1066).